We begin with the raw amino-acid sequence, 838 residues long: Probable beta-glucosidase K (838 aa).

N-linked (GlcNAc...) asparagine glycosylation occurs at Asn19. Asp232 is a catalytic residue. N-linked (GlcNAc...) asparagine glycans are attached at residues Asn324 and Asn489. The region spanning 405–564 is the PA14 domain; that stretch reads EGQPGLRMRF…DPELAIARAV (160 aa).

Belongs to the glycosyl hydrolase 3 family.

Its subcellular location is the secreted. It catalyses the reaction Hydrolysis of terminal, non-reducing beta-D-glucosyl residues with release of beta-D-glucose.. The protein operates within glycan metabolism; cellulose degradation. Beta-glucosidases are one of a number of cellulolytic enzymes involved in the degradation of cellulosic biomass. Catalyzes the last step releasing glucose from the inhibitory cellobiose. The protein is Probable beta-glucosidase K (bglK) of Emericella nidulans (strain FGSC A4 / ATCC 38163 / CBS 112.46 / NRRL 194 / M139) (Aspergillus nidulans).